The sequence spans 201 residues: 3-isopropylmalate dehydratase small subunit (201 aa).

This sequence belongs to the LeuD family. LeuD type 1 subfamily. As to quaternary structure, heterodimer of LeuC and LeuD.

It catalyses the reaction (2R,3S)-3-isopropylmalate = (2S)-2-isopropylmalate. It functions in the pathway amino-acid biosynthesis; L-leucine biosynthesis; L-leucine from 3-methyl-2-oxobutanoate: step 2/4. Its function is as follows. Catalyzes the isomerization between 2-isopropylmalate and 3-isopropylmalate, via the formation of 2-isopropylmaleate. The protein is 3-isopropylmalate dehydratase small subunit of Escherichia coli O127:H6 (strain E2348/69 / EPEC).